A 443-amino-acid chain; its full sequence is 5-methylthioadenosine/S-adenosylhomocysteine deaminase (443 aa).

The Zn(2+) site is built by H74 and H76. Residues E103 and H196 each contribute to the substrate site. Residue H223 coordinates Zn(2+). 2 residues coordinate substrate: E226 and D311. D311 provides a ligand contact to Zn(2+).

Belongs to the metallo-dependent hydrolases superfamily. MTA/SAH deaminase family. Requires Zn(2+) as cofactor.

It catalyses the reaction S-adenosyl-L-homocysteine + H2O + H(+) = S-inosyl-L-homocysteine + NH4(+). The enzyme catalyses S-methyl-5'-thioadenosine + H2O + H(+) = S-methyl-5'-thioinosine + NH4(+). Its function is as follows. Catalyzes the deamination of 5-methylthioadenosine and S-adenosyl-L-homocysteine into 5-methylthioinosine and S-inosyl-L-homocysteine, respectively. Is also able to deaminate adenosine. This is 5-methylthioadenosine/S-adenosylhomocysteine deaminase from Haloquadratum walsbyi (strain DSM 16790 / HBSQ001).